A 210-amino-acid chain; its full sequence is LexA repressor (210 aa).

Residues phenylalanine 28–glycine 48 constitute a DNA-binding region (H-T-H motif). Residues serine 131 and lysine 169 each act as for autocatalytic cleavage activity in the active site.

It belongs to the peptidase S24 family. Homodimer.

It carries out the reaction Hydrolysis of Ala-|-Gly bond in repressor LexA.. Its function is as follows. Represses a number of genes involved in the response to DNA damage (SOS response), including recA and lexA. In the presence of single-stranded DNA, RecA interacts with LexA causing an autocatalytic cleavage which disrupts the DNA-binding part of LexA, leading to derepression of the SOS regulon and eventually DNA repair. This Koribacter versatilis (strain Ellin345) protein is LexA repressor.